The following is a 271-amino-acid chain: Orotidine 5'-phosphate decarboxylase (271 aa).

K97 serves as the catalytic Proton donor.

This sequence belongs to the OMP decarboxylase family. Type 2 subfamily.

It catalyses the reaction orotidine 5'-phosphate + H(+) = UMP + CO2. The protein operates within pyrimidine metabolism; UMP biosynthesis via de novo pathway; UMP from orotate: step 2/2. This is Orotidine 5'-phosphate decarboxylase from Leptospira borgpetersenii serovar Hardjo-bovis (strain JB197).